We begin with the raw amino-acid sequence, 258 residues long: Acetylglutamate kinase (258 aa).

Substrate contacts are provided by residues 41 to 42, Arg63, and Asn156; that span reads GG.

It belongs to the acetylglutamate kinase family. ArgB subfamily.

The protein localises to the cytoplasm. The enzyme catalyses N-acetyl-L-glutamate + ATP = N-acetyl-L-glutamyl 5-phosphate + ADP. The protein operates within amino-acid biosynthesis; L-arginine biosynthesis; N(2)-acetyl-L-ornithine from L-glutamate: step 2/4. Its function is as follows. Catalyzes the ATP-dependent phosphorylation of N-acetyl-L-glutamate. This chain is Acetylglutamate kinase, found in Bacillus velezensis (strain DSM 23117 / BGSC 10A6 / LMG 26770 / FZB42) (Bacillus amyloliquefaciens subsp. plantarum).